The following is a 235-amino-acid chain: Probable transcriptional regulatory protein CFF8240_0424 (235 aa).

Belongs to the TACO1 family.

It is found in the cytoplasm. The polypeptide is Probable transcriptional regulatory protein CFF8240_0424 (Campylobacter fetus subsp. fetus (strain 82-40)).